Here is a 196-residue protein sequence, read N- to C-terminus: MQLKRVAEAKLPTPWGDFLMVGFEELATGHDHVALVYGDISGHTPVLARVHSECLTGDALFSLRCDCGFQLEAALTQIAEEGRGILLYHRQEGRNIGLLNKIRAYALQDQGYDTVEANHQLGFAADERDFTLCADMFKLLGVNEVRLLTNNPKKVEILTEAGINIIERVPLIVGRNPNNEHYLDTKAEKMGHLLNK.

GTP is bound at residue 49–53; that stretch reads RVHSE. The Zn(2+) site is built by C54, C65, and C67. GTP is bound by residues Q70, 92 to 94, and T114; that span reads EGR. D126 (proton acceptor) is an active-site residue. Residue R128 is the Nucleophile of the active site. GTP contacts are provided by T149 and K154.

It belongs to the GTP cyclohydrolase II family. Homodimer. It depends on Zn(2+) as a cofactor.

The enzyme catalyses GTP + 4 H2O = 2,5-diamino-6-hydroxy-4-(5-phosphoribosylamino)-pyrimidine + formate + 2 phosphate + 3 H(+). Its pathway is cofactor biosynthesis; riboflavin biosynthesis; 5-amino-6-(D-ribitylamino)uracil from GTP: step 1/4. Catalyzes the conversion of GTP to 2,5-diamino-6-ribosylamino-4(3H)-pyrimidinone 5'-phosphate (DARP), formate and pyrophosphate. The protein is GTP cyclohydrolase-2 of Escherichia coli O45:K1 (strain S88 / ExPEC).